The chain runs to 213 residues: RxLR effector protein PexRD1 (213 aa).

Positions 1–19 (MRACNTLLPTAIVLTSCDA) are cleaved as a signal peptide. The RxLR-dEER signature appears at 50–77 (RQLRGFYATENTDPVNNQDTAHEDGEER).

The protein belongs to the RxLR effector family.

It localises to the secreted. Its subcellular location is the host nucleus. Functionally, effector that enhances P.infestans colonization of Nicotiana benthamiana leaves. The sequence is that of RxLR effector protein PexRD1 from Phytophthora infestans (strain T30-4) (Potato late blight agent).